The primary structure comprises 542 residues: CTP synthase (542 aa).

The segment at 1–265 (MTKFVFVTGG…DEIVCHKLNL (265 aa)) is amidoligase domain. Ser-13 contributes to the CTP binding site. Residue Ser-13 participates in UTP binding. Residues 14 to 19 (SLGKGI) and Asp-71 contribute to the ATP site. Residues Asp-71 and Glu-139 each contribute to the Mg(2+) site. CTP contacts are provided by residues 146 to 148 (DIE), 186 to 191 (KTKPTQ), and Lys-222. Residues 186–191 (KTKPTQ) and Lys-222 contribute to the UTP site. Residues 290 to 542 (NVAFVGKYVD…IAAALANRKA (253 aa)) enclose the Glutamine amidotransferase type-1 domain. Gly-351 is an L-glutamine binding site. Cys-378 serves as the catalytic Nucleophile; for glutamine hydrolysis. Residues 379 to 382 (LGMQ), Glu-402, and Arg-468 contribute to the L-glutamine site. Residues His-515 and Glu-517 contribute to the active site.

The protein belongs to the CTP synthase family. Homotetramer.

It carries out the reaction UTP + L-glutamine + ATP + H2O = CTP + L-glutamate + ADP + phosphate + 2 H(+). It catalyses the reaction L-glutamine + H2O = L-glutamate + NH4(+). The enzyme catalyses UTP + NH4(+) + ATP = CTP + ADP + phosphate + 2 H(+). It participates in pyrimidine metabolism; CTP biosynthesis via de novo pathway; CTP from UDP: step 2/2. Allosterically activated by GTP, when glutamine is the substrate; GTP has no effect on the reaction when ammonia is the substrate. The allosteric effector GTP functions by stabilizing the protein conformation that binds the tetrahedral intermediate(s) formed during glutamine hydrolysis. Inhibited by the product CTP, via allosteric rather than competitive inhibition. In terms of biological role, catalyzes the ATP-dependent amination of UTP to CTP with either L-glutamine or ammonia as the source of nitrogen. Regulates intracellular CTP levels through interactions with the four ribonucleotide triphosphates. This chain is CTP synthase, found in Methylobacillus flagellatus (strain ATCC 51484 / DSM 6875 / VKM B-1610 / KT).